The primary structure comprises 276 residues: GPN-loop GTPase 3 (276 aa).

Serine 13–threonine 18 contacts GTP. The Gly-Pro-Asn (GPN)-loop; involved in dimer interface motif lies at glycine 70–asparagine 72. Serine 173–aspartate 176 is a GTP binding site. Positions glutamate 257–glutamate 276 are disordered. A compositionally biased stretch (basic and acidic residues) spans glutamine 259–alanine 269.

Belongs to the GPN-loop GTPase family. Heterodimers with gpn1 or gpn2. Binds to RNA polymerase II (RNAPII).

The protein resides in the cytoplasm. The protein localises to the nucleus. Functionally, small GTPase required for proper nuclear import of RNA polymerase II and III (RNAPII and RNAPIII). May act at an RNAP assembly step prior to nuclear import. This Schizosaccharomyces pombe (strain 972 / ATCC 24843) (Fission yeast) protein is GPN-loop GTPase 3.